The chain runs to 325 residues: Syntaxin-16 (325 aa).

Residues 1–301 (MATRRLTDAF…AEQYQKKNRK (301 aa)) lie on the Cytoplasmic side of the membrane. Phosphoserine is present on Ser41. The 63-residue stretch at 230-292 (TLMVEERERE…EDGLKQLHKA (63 aa)) folds into the t-SNARE coiled-coil homology domain. Residues 302–322 (MLVILILFVIIIVLIVVLVGV) traverse the membrane as a helical; Anchor for type IV membrane protein segment. Topologically, residues 323–325 (KSR) are vesicular.

The protein belongs to the syntaxin family. As to quaternary structure, interacts with GCC2. Interacts with BAIAP3; this interaction is increased in the presence of calcium. Ubiquitous.

The protein localises to the golgi apparatus membrane. Its subcellular location is the cytoplasm. In terms of biological role, SNARE involved in vesicular transport from the late endosomes to the trans-Golgi network. This is Syntaxin-16 (STX16) from Homo sapiens (Human).